A 360-amino-acid chain; its full sequence is Peptide chain release factor 1 (360 aa).

Q237 bears the N5-methylglutamine mark.

The protein belongs to the prokaryotic/mitochondrial release factor family. In terms of processing, methylated by PrmC. Methylation increases the termination efficiency of RF1.

It localises to the cytoplasm. Its function is as follows. Peptide chain release factor 1 directs the termination of translation in response to the peptide chain termination codons UAG and UAA. In Pseudomonas entomophila (strain L48), this protein is Peptide chain release factor 1.